We begin with the raw amino-acid sequence, 444 residues long: Exodeoxyribonuclease 7 large subunit (444 aa).

Belongs to the XseA family. Heterooligomer composed of large and small subunits.

It is found in the cytoplasm. The enzyme catalyses Exonucleolytic cleavage in either 5'- to 3'- or 3'- to 5'-direction to yield nucleoside 5'-phosphates.. Functionally, bidirectionally degrades single-stranded DNA into large acid-insoluble oligonucleotides, which are then degraded further into small acid-soluble oligonucleotides. This chain is Exodeoxyribonuclease 7 large subunit, found in Xylella fastidiosa (strain 9a5c).